A 348-amino-acid chain; its full sequence is Putative transport protein HI_0338 (348 aa).

9 helical membrane passes run 7 to 27, 28 to 48, 60 to 80, 139 to 159, 196 to 216, 223 to 243, 245 to 265, 267 to 287, and 296 to 316; these read LHRT…VKLA, AEIV…SPII, LAIT…VGLI, VLLN…VVIF, VIGY…GVFI, VQYA…PNIG, IIAA…GIGF, VAIG…PKMM, and LVVF…GMLL.

It belongs to the autoinducer-2 exporter (AI-2E) (TC 2.A.86) family.

The protein localises to the cell membrane. This is Putative transport protein HI_0338 from Haemophilus influenzae (strain ATCC 51907 / DSM 11121 / KW20 / Rd).